The primary structure comprises 591 residues: Aspartate--tRNA(Asp/Asn) ligase (591 aa).

Position 175 (E175) interacts with L-aspartate. The segment at 199 to 202 (QQFK) is aspartate. L-aspartate-binding residues include R221 and H453. 221 to 223 (RDE) is a binding site for ATP. E486 serves as a coordination point for ATP. R493 serves as a coordination point for L-aspartate. 538-541 (GIDR) serves as a coordination point for ATP.

Belongs to the class-II aminoacyl-tRNA synthetase family. Type 1 subfamily. In terms of assembly, homodimer.

The protein localises to the cytoplasm. The enzyme catalyses tRNA(Asx) + L-aspartate + ATP = L-aspartyl-tRNA(Asx) + AMP + diphosphate. Its function is as follows. Aspartyl-tRNA synthetase with relaxed tRNA specificity since it is able to aspartylate not only its cognate tRNA(Asp) but also tRNA(Asn). Reaction proceeds in two steps: L-aspartate is first activated by ATP to form Asp-AMP and then transferred to the acceptor end of tRNA(Asp/Asn). This is Aspartate--tRNA(Asp/Asn) ligase from Cereibacter sphaeroides (strain ATCC 17025 / ATH 2.4.3) (Rhodobacter sphaeroides).